We begin with the raw amino-acid sequence, 92 residues long: MAKEELIQFEGLVTEILPDARYRVQLDTGHEIVAYTAGKMKKNRIKTLAGDRVTVEMSPYDLEKGRLIFRHKDERPGGPPRSGPPRGQFRRR.

An S1-like domain is found at 1–72 (MAKEELIQFE…EKGRLIFRHK (72 aa)). A disordered region spans residues 69–92 (FRHKDERPGGPPRSGPPRGQFRRR).

The protein belongs to the IF-1 family. Component of the 30S ribosomal translation pre-initiation complex which assembles on the 30S ribosome in the order IF-2 and IF-3, IF-1 and N-formylmethionyl-tRNA(fMet); mRNA recruitment can occur at any time during PIC assembly.

Its subcellular location is the cytoplasm. In terms of biological role, one of the essential components for the initiation of protein synthesis. Stabilizes the binding of IF-2 and IF-3 on the 30S subunit to which N-formylmethionyl-tRNA(fMet) subsequently binds. Helps modulate mRNA selection, yielding the 30S pre-initiation complex (PIC). Upon addition of the 50S ribosomal subunit IF-1, IF-2 and IF-3 are released leaving the mature 70S translation initiation complex. This chain is Translation initiation factor IF-1, found in Rhodopseudomonas palustris (strain ATCC BAA-98 / CGA009).